Here is a 556-residue protein sequence, read N- to C-terminus: Acetyl-coenzyme A thioesterase (556 aa).

Positions 6 to 118 (APGEVLMSQA…FSTFVVKPLG (113 aa)) constitute a HotDog ACOT-type 1 domain. Lysine 34 bears the N6-succinyllysine mark. Residues 54–56 (TAS) and 83–85 (STS) contribute to the CoA site. Lysine 97 bears the N6-succinyllysine mark. Arginine 145 contributes to the CoA binding site. Residues lysine 160 and lysine 229 each carry the N6-succinyllysine modification. A HotDog ACOT-type 2 domain is found at 180 to 295 (MATSVQSIEL…FLIYNAVDDQ (116 aa)). 235 to 237 (KFR) contacts CoA. The region spanning 341-550 (GTQWDISKKG…IKFIENATHD (210 aa)) is the START domain.

Homodimer or homotetramer.

Its subcellular location is the cytoplasm. The protein localises to the cytosol. It catalyses the reaction acetyl-CoA + H2O = acetate + CoA + H(+). The enzyme catalyses butanoyl-CoA + H2O = butanoate + CoA + H(+). It carries out the reaction hexanoyl-CoA + H2O = hexanoate + CoA + H(+). It functions in the pathway lipid metabolism; fatty acid metabolism. Its activity is regulated as follows. Allosterically regulated by ATP (activator) and ADP (inhibitor). Cold labile, it dissociates into inactive monomers at low temperature. Catalyzes the hydrolysis of acyl-CoAs into free fatty acids and coenzyme A (CoASH), regulating their respective intracellular levels. Preferentially hydrolyzes acetyl-CoA. The protein is Acetyl-coenzyme A thioesterase (Acot12) of Rattus norvegicus (Rat).